Here is a 143-residue protein sequence, read N- to C-terminus: D-aminoacyl-tRNA deacylase (143 aa).

Positions 135 to 136 (GP) match the Gly-cisPro motif, important for rejection of L-amino acids motif.

It belongs to the DTD family. In terms of assembly, homodimer.

The protein localises to the cytoplasm. The catalysed reaction is glycyl-tRNA(Ala) + H2O = tRNA(Ala) + glycine + H(+). It catalyses the reaction a D-aminoacyl-tRNA + H2O = a tRNA + a D-alpha-amino acid + H(+). In terms of biological role, an aminoacyl-tRNA editing enzyme that deacylates mischarged D-aminoacyl-tRNAs. Also deacylates mischarged glycyl-tRNA(Ala), protecting cells against glycine mischarging by AlaRS. Acts via tRNA-based rather than protein-based catalysis; rejects L-amino acids rather than detecting D-amino acids in the active site. By recycling D-aminoacyl-tRNA to D-amino acids and free tRNA molecules, this enzyme counteracts the toxicity associated with the formation of D-aminoacyl-tRNA entities in vivo and helps enforce protein L-homochirality. The chain is D-aminoacyl-tRNA deacylase from Mycolicibacterium paratuberculosis (strain ATCC BAA-968 / K-10) (Mycobacterium paratuberculosis).